A 197-amino-acid chain; its full sequence is Baseplate puncturing device gp45 (197 aa).

A disordered region spans residues D172–Q197. Residues S179 to D188 show a composition bias toward basic and acidic residues. Residues H183 and H185 each coordinate Fe cation. Residues D188 and S189 each contribute to the Ca(2+) site. Chloride is bound at residue D188.

In terms of assembly, homotrimer. Part of a complex composed of three DNA circularization protein N, three baseplate hub protein gp44 and three sub-complex wedge (made of two copies of each baseplate protein gp46, gp47 and gp48) that forms the baseplate. The cofactor is Ca(2+). Chloride is required as a cofactor. Fe cation serves as cofactor.

It is found in the virion. It localises to the host cytoplasm. Functionally, component of the baseplate that forms a central needlelike spike used to puncture the host cell membrane for tube insertion during virus entry. Probably involved in baseplate and tail assembly. Serves as the distal plug of tail tube channel and might regulate the process of the phage DNA and protein ejection into the host cell. The protein is Baseplate puncturing device gp45 of Escherichia phage Mu (Bacteriophage Mu).